The chain runs to 384 residues: DNA replication and repair protein RecF (384 aa).

30–37 serves as a coordination point for ATP; that stretch reads GENAQGKT.

It belongs to the RecF family.

It is found in the cytoplasm. In terms of biological role, the RecF protein is involved in DNA metabolism; it is required for DNA replication and normal SOS inducibility. RecF binds preferentially to single-stranded, linear DNA. It also seems to bind ATP. In Levilactobacillus brevis (strain ATCC 367 / BCRC 12310 / CIP 105137 / JCM 1170 / LMG 11437 / NCIMB 947 / NCTC 947) (Lactobacillus brevis), this protein is DNA replication and repair protein RecF.